We begin with the raw amino-acid sequence, 156 residues long: ATP synthase subunit b (156 aa).

Residues 3–23 form a helical membrane-spanning segment; the sequence is INFTLLAQALAFAGLIWIIAT.

It belongs to the ATPase B chain family. In terms of assembly, F-type ATPases have 2 components, F(1) - the catalytic core - and F(0) - the membrane proton channel. F(1) has five subunits: alpha(3), beta(3), gamma(1), delta(1), epsilon(1). F(0) has three main subunits: a(1), b(2) and c(10-14). The alpha and beta chains form an alternating ring which encloses part of the gamma chain. F(1) is attached to F(0) by a central stalk formed by the gamma and epsilon chains, while a peripheral stalk is formed by the delta and b chains.

It is found in the cell membrane. Its function is as follows. F(1)F(0) ATP synthase produces ATP from ADP in the presence of a proton or sodium gradient. F-type ATPases consist of two structural domains, F(1) containing the extramembraneous catalytic core and F(0) containing the membrane proton channel, linked together by a central stalk and a peripheral stalk. During catalysis, ATP synthesis in the catalytic domain of F(1) is coupled via a rotary mechanism of the central stalk subunits to proton translocation. Functionally, component of the F(0) channel, it forms part of the peripheral stalk, linking F(1) to F(0). The sequence is that of ATP synthase subunit b from Stenotrophomonas maltophilia (strain K279a).